The primary structure comprises 235 residues: Triosephosphate isomerase (235 aa).

Substrate is bound at residue 7–9 (NFK). The active-site Electrophile is the His92. The active-site Proton acceptor is Glu161. 2 residues coordinate substrate: Gly167 and Ser197.

This sequence belongs to the triosephosphate isomerase family. As to quaternary structure, homodimer.

It is found in the cytoplasm. The catalysed reaction is D-glyceraldehyde 3-phosphate = dihydroxyacetone phosphate. It functions in the pathway carbohydrate biosynthesis; gluconeogenesis. The protein operates within carbohydrate degradation; glycolysis; D-glyceraldehyde 3-phosphate from glycerone phosphate: step 1/1. Functionally, involved in the gluconeogenesis. Catalyzes stereospecifically the conversion of dihydroxyacetone phosphate (DHAP) to D-glyceraldehyde-3-phosphate (G3P). In Helicobacter hepaticus (strain ATCC 51449 / 3B1), this protein is Triosephosphate isomerase.